A 175-amino-acid polypeptide reads, in one-letter code: Adenine phosphoribosyltransferase (175 aa).

This sequence belongs to the purine/pyrimidine phosphoribosyltransferase family. As to quaternary structure, homodimer.

The protein resides in the cytoplasm. The catalysed reaction is AMP + diphosphate = 5-phospho-alpha-D-ribose 1-diphosphate + adenine. It functions in the pathway purine metabolism; AMP biosynthesis via salvage pathway; AMP from adenine: step 1/1. Functionally, catalyzes a salvage reaction resulting in the formation of AMP, that is energically less costly than de novo synthesis. The chain is Adenine phosphoribosyltransferase from Synechococcus sp. (strain CC9902).